Reading from the N-terminus, the 678-residue chain is Dol-P-Man:Man(7)GlcNAc(2)-PP-Dol alpha-1,6-mannosyltransferase (678 aa).

Helical transmembrane passes span 1–21, 56–76, 81–101, 109–129, 133–153, 168–188, 200–220, 252–272, 279–299, 301–321, and 334–354; these read MDIL…FTKV, FIGP…FETL, FWAQ…AWNS, IYGV…FHFM, TRPL…AYWL, ILVF…VSLL, VALP…SFFW, FYSA…IGVA, PLVL…HKEL, FIIY…QRIW, and ALAC…LLVI.

It belongs to the glycosyltransferase 22 family.

Its subcellular location is the endoplasmic reticulum membrane. It carries out the reaction an alpha-D-Man-(1-&gt;2)-alpha-D-Man-(1-&gt;2)-alpha-D-Man-(1-&gt;3)-[alpha-D-Man-(1-&gt;2)-alpha-D-Man-(1-&gt;3)-alpha-D-Man-(1-&gt;6)]-beta-D-Man-(1-&gt;4)-beta-D-GlcNAc-(1-&gt;4)-alpha-D-GlcNAc-diphospho-di-trans,poly-cis-dolichol + a di-trans,poly-cis-dolichyl beta-D-mannosyl phosphate = an alpha-D-Man-(1-&gt;2)-alpha-D-Man-(1-&gt;2)-alpha-D-Man-(1-&gt;3)-[alpha-D-Man-(1-&gt;2)-alpha-D-Man-(1-&gt;3)-[alpha-D-Man-(1-&gt;6)]-alpha-D-Man-(1-&gt;6)]-beta-D-Man-(1-&gt;4)-beta-D-GlcNAc-(1-&gt;4)-alpha-D-GlcNAc-diphospho-di-trans,poly-cis-dolichol + a di-trans,poly-cis-dolichyl phosphate + H(+). The protein operates within protein modification; protein glycosylation. In terms of biological role, mannosyltransferase that operates in the biosynthetic pathway of dolichol-linked oligosaccharides, the glycan precursors employed in protein asparagine (N)-glycosylation. The assembly of dolichol-linked oligosaccharides begins on the cytosolic side of the endoplasmic reticulum membrane and finishes in its lumen. The sequential addition of sugars to dolichol pyrophosphate produces dolichol-linked oligosaccharides containing fourteen sugars, including two GlcNAcs, nine mannoses and three glucoses. Once assembled, the oligosaccharide is transferred from the lipid to nascent proteins by oligosaccharyltransferases. In the lumen of the endoplasmic reticulum, adds the eighth mannose residue in an alpha-1,6 linkage onto Man(7)GlcNAc(2)-PP-dolichol to produce Man(8)GlcNAc(2)-PP-dolichol. This chain is Dol-P-Man:Man(7)GlcNAc(2)-PP-Dol alpha-1,6-mannosyltransferase, found in Drosophila melanogaster (Fruit fly).